Here is a 121-residue protein sequence, read N- to C-terminus: Protein ripply2.1 (121 aa).

Residues 1 to 69 are disordered; the sequence is MEPNQQRSCG…DKGKPPSFQH (69 aa). The short motif at 29–32 is the WRPW motif element; sequence WRPW. A compositionally biased stretch (polar residues) spans 39–57; sequence HVQNPPTAQQQFYSDNQSH. Residues 69 to 104 form a ripply homology domain region; sequence HPVKLFWPKSRCYDFMYQEAEELLRHFPVQATISLY.

Belongs to the ripply family. In terms of tissue distribution, expressed in the presomitic mesoderm (PSM) in the anterior halves of somitomeres S-0, S-I and S-II and in the newly formed somites.

The protein localises to the nucleus. Functionally, required during somitogenesis to regulate somite differentiation and the positioning of the presomitic mesoderm-front. Represses the expression of genes involved in somite segmentation by acting with the corepressor tle4 to down-regulate the transcriptional activity of tbx6. Also regulates retinoic acid signaling during somitogenesis and is necessary for the expression of aldh1a2/raldh2. The sequence is that of Protein ripply2.1 (ripply2.1) from Xenopus laevis (African clawed frog).